We begin with the raw amino-acid sequence, 740 residues long: Ion-translocating oxidoreductase complex subunit C (740 aa).

2 consecutive 4Fe-4S ferredoxin-type domains span residues 369–397 (GEPQEEQSCIRCSACADACPADLLPQQLY) and 407–436 (KATTHNIADCIECGACAWVCPSNIPLVQYF). [4Fe-4S] cluster is bound by residues Cys377, Cys380, Cys383, Cys387, Cys416, Cys419, Cys422, and Cys426. 2 disordered regions span residues 602-621 (KLEQQQANAKPEEQVDPRKA) and 660-718 (ARAK…RKAA). Basic and acidic residues predominate over residues 611–621 (KPEEQVDPRKA).

The protein belongs to the 4Fe4S bacterial-type ferredoxin family. RnfC subfamily. As to quaternary structure, the complex is composed of six subunits: RsxA, RsxB, RsxC, RsxD, RsxE and RsxG. [4Fe-4S] cluster serves as cofactor.

Its subcellular location is the cell inner membrane. Part of a membrane-bound complex that couples electron transfer with translocation of ions across the membrane. Required to maintain the reduced state of SoxR. This is Ion-translocating oxidoreductase complex subunit C from Escherichia coli O9:H4 (strain HS).